The primary structure comprises 358 residues: Phospho-N-acetylmuramoyl-pentapeptide-transferase (358 aa).

10 helical membrane passes run 3 to 23 (QILFAAAIALTVSILLTPALI), 54 to 74 (GVAILIGMWAGYLGSHLIGIA), 84 to 104 (ALLVLGLATALGAVGFIDDFI), 114 to 134 (LTAAGKYLGQLTAAIVFGVLA), 156 to 176 (ITTVSMGVIVFLAFVSLVVVA), 187 to 207 (LDGLAAGSMSLVLGGYVIITF), 231 to 251 (LALVCAAGTAACIGFLWWNAA), 255 to 275 (IFMGDTGSLALGGLLAGLSIT), 283 to 303 (VVIGALFVAEAASVVLQVAVF), and 330 to 350 (VIIRFWLLAAMASAFGLGLFY).

Belongs to the glycosyltransferase 4 family. MraY subfamily. Requires Mg(2+) as cofactor.

Its subcellular location is the cell membrane. The catalysed reaction is UDP-N-acetyl-alpha-D-muramoyl-L-alanyl-gamma-D-glutamyl-meso-2,6-diaminopimeloyl-D-alanyl-D-alanine + di-trans,octa-cis-undecaprenyl phosphate = di-trans,octa-cis-undecaprenyl diphospho-N-acetyl-alpha-D-muramoyl-L-alanyl-D-glutamyl-meso-2,6-diaminopimeloyl-D-alanyl-D-alanine + UMP. It functions in the pathway cell wall biogenesis; peptidoglycan biosynthesis. Functionally, catalyzes the initial step of the lipid cycle reactions in the biosynthesis of the cell wall peptidoglycan: transfers peptidoglycan precursor phospho-MurNAc-pentapeptide from UDP-MurNAc-pentapeptide onto the lipid carrier undecaprenyl phosphate, yielding undecaprenyl-pyrophosphoryl-MurNAc-pentapeptide, known as lipid I. The sequence is that of Phospho-N-acetylmuramoyl-pentapeptide-transferase from Nocardia farcinica (strain IFM 10152).